We begin with the raw amino-acid sequence, 119 residues long: Large ribosomal subunit protein uL18 (119 aa).

The protein belongs to the universal ribosomal protein uL18 family. As to quaternary structure, part of the 50S ribosomal subunit; part of the 5S rRNA/L5/L18/L25 subcomplex. Contacts the 5S and 23S rRNAs.

This is one of the proteins that bind and probably mediate the attachment of the 5S RNA into the large ribosomal subunit, where it forms part of the central protuberance. The chain is Large ribosomal subunit protein uL18 from Xylella fastidiosa (strain 9a5c).